A 1193-amino-acid chain; its full sequence is Kinesin-related protein 3 (1193 aa).

The 327-residue stretch at 3–329 folds into the Kinesin motor domain; sequence SIRVVCRFRP…LRFGSRAKNI (327 aa). 85 to 92 serves as a coordination point for ATP; the sequence is GQTGSGKT. Disordered stretches follow at residues 377–429, 573–600, 611–630, 638–665, 973–1016, 1032–1114, and 1127–1193; these read KSSG…SSNV, SSIASLVPSTPKSSAEMDPLATASKHAD, LLQRTPSKAVGSSKSNTATS, ISESDNIGSGATTTTNNNNATITPATSS, GGGG…SANL, KAEP…PVKI, and FKKK…QQKD. The segment covering 405 to 429 has biased composition (low complexity); it reads SSNLSNSVNSTSNLNTSSNTSSSNV. The stretch at 450-962 forms a coiled coil; that stretch reads ELIKVLQEKC…SQVGVDAQNT (513 aa). Polar residues-rich tracts occupy residues 573–585 and 614–630; these read SSIASLVPSTPKS and RTPSKAVGSSKSNTATS. 2 stretches are compositionally biased toward low complexity: residues 643-665 and 985-1006; these read NIGSGATTTTNNNNATITPATSS and HSSSSSTSSSSALNHSSINNNH. Residues 1007-1016 show a composition bias toward polar residues; that stretch reads TTPTPLSANL. Low complexity-rich tracts occupy residues 1044–1078, 1086–1109, and 1132–1149; these read NTSIPSSPNHTSSNNINNNSNNNNNNNNNNNIGNS, NNNSSISNSNNNSSSNLNANLNGN, and PSSTPPSSTNNLSPQSPQ. Polar residues-rich tracts occupy residues 1150–1165 and 1174–1193; these read TPSHLSADGSGNISPN and FSYTPAVVTSSTINKDQQKD.

The protein belongs to the TRAFAC class myosin-kinesin ATPase superfamily. Kinesin family. Kinesin subfamily. Dimer.

Its subcellular location is the cytoplasm. It localises to the cytoskeleton. Functionally, microtubule-associated force-producing protein that plays a role in organelle transport. Its motor activity is directed toward the microtubule's plus end. The maximal velocity in an inverted motility assay (moving microtubules on fixed motors) was 1.96 um/s. In Dictyostelium discoideum (Social amoeba), this protein is Kinesin-related protein 3 (kif3).